The primary structure comprises 259 residues: Expansin-B6 (259 aa).

The N-terminal stretch at 1–24 is a signal peptide; it reads MASSSHRYFALLALFAVSLKFCYC. A glycan (N-linked (GlcNAc...) asparagine) is linked at asparagine 26. In terms of domain architecture, Expansin-like EG45 spans 52–160; the sequence is GGACGFAVAN…IRVECLYRRT (109 aa). Cystine bridges form between cysteine 55–cysteine 82, cysteine 85–cysteine 155, and cysteine 90–cysteine 96. The Expansin-like CBD domain occupies 173 to 254; that stretch reads YYISFVVEYE…NWKPNETYRS (82 aa). An N-linked (GlcNAc...) asparagine glycan is attached at asparagine 249.

It belongs to the expansin family. Expansin B subfamily.

Its subcellular location is the secreted. The protein localises to the cell wall. The protein resides in the membrane. Functionally, may cause loosening and extension of plant cell walls by disrupting non-covalent bonding between cellulose microfibrils and matrix glucans. The chain is Expansin-B6 from Arabidopsis thaliana (Mouse-ear cress).